A 132-amino-acid polypeptide reads, in one-letter code: Translation initiation factor 5A (132 aa).

At lysine 36 the chain carries Hypusine.

Belongs to the eIF-5A family.

Its subcellular location is the cytoplasm. Functions by promoting the formation of the first peptide bond. This is Translation initiation factor 5A (eIF5A) from Caldivirga maquilingensis (strain ATCC 700844 / DSM 13496 / JCM 10307 / IC-167).